Here is a 367-residue protein sequence, read N- to C-terminus: Phosphoribosylaminoimidazole-succinocarboxamide synthase (367 aa).

This sequence belongs to the SAICAR synthetase family.

It catalyses the reaction 5-amino-1-(5-phospho-D-ribosyl)imidazole-4-carboxylate + L-aspartate + ATP = (2S)-2-[5-amino-1-(5-phospho-beta-D-ribosyl)imidazole-4-carboxamido]succinate + ADP + phosphate + 2 H(+). The protein operates within purine metabolism; IMP biosynthesis via de novo pathway; 5-amino-1-(5-phospho-D-ribosyl)imidazole-4-carboxamide from 5-amino-1-(5-phospho-D-ribosyl)imidazole-4-carboxylate: step 1/2. The sequence is that of Phosphoribosylaminoimidazole-succinocarboxamide synthase from Vibrio parahaemolyticus serotype O3:K6 (strain RIMD 2210633).